Reading from the N-terminus, the 423-residue chain is D-tagatose-1,6-bisphosphate aldolase subunit GatZ (423 aa).

The protein belongs to the GatZ/KbaZ family. GatZ subfamily. In terms of assembly, forms a complex with GatY.

It participates in carbohydrate metabolism; D-tagatose 6-phosphate degradation; D-glyceraldehyde 3-phosphate and glycerone phosphate from D-tagatose 6-phosphate: step 2/2. Its function is as follows. Component of the tagatose-1,6-bisphosphate aldolase GatYZ that is required for full activity and stability of the Y subunit. Could have a chaperone-like function for the proper and stable folding of GatY. When expressed alone, GatZ does not show any aldolase activity. Is involved in the catabolism of galactitol. This Salmonella enteritidis PT4 (strain P125109) protein is D-tagatose-1,6-bisphosphate aldolase subunit GatZ.